The primary structure comprises 173 residues: Probable xanthine dehydrogenase subunit E (173 aa).

Positions 14–90 (EQFRMTVNGQ…GHSITTIEGL (77 aa)) constitute a 2Fe-2S ferredoxin-type domain. Positions 52, 57, 60, 72, 110, 113, 145, and 147 each coordinate [2Fe-2S] cluster.

In terms of assembly, could be composed of four subunits: PucA, PucC, PucD and PucE. It depends on [2Fe-2S] cluster as a cofactor.

It carries out the reaction xanthine + NAD(+) + H2O = urate + NADH + H(+). It catalyses the reaction hypoxanthine + NAD(+) + H2O = xanthine + NADH + H(+). The protein operates within purine metabolism; hypoxanthine degradation; urate from hypoxanthine: step 1/2. It participates in purine metabolism; hypoxanthine degradation; urate from hypoxanthine: step 2/2. Functionally, oxidizes hypoxanthine and xanthine to uric acid. This chain is Probable xanthine dehydrogenase subunit E (pucE), found in Bacillus subtilis (strain 168).